Consider the following 293-residue polypeptide: 4-hydroxy-tetrahydrodipicolinate synthase (293 aa).

Position 47 (Thr47) interacts with pyruvate. Tyr136 (proton donor/acceptor) is an active-site residue. Lys164 (schiff-base intermediate with substrate) is an active-site residue. Position 206 (Ile206) interacts with pyruvate.

It belongs to the DapA family. As to quaternary structure, homotetramer; dimer of dimers.

It localises to the cytoplasm. The catalysed reaction is L-aspartate 4-semialdehyde + pyruvate = (2S,4S)-4-hydroxy-2,3,4,5-tetrahydrodipicolinate + H2O + H(+). The protein operates within amino-acid biosynthesis; L-lysine biosynthesis via DAP pathway; (S)-tetrahydrodipicolinate from L-aspartate: step 3/4. Catalyzes the condensation of (S)-aspartate-beta-semialdehyde [(S)-ASA] and pyruvate to 4-hydroxy-tetrahydrodipicolinate (HTPA). This Listeria monocytogenes serotype 4a (strain HCC23) protein is 4-hydroxy-tetrahydrodipicolinate synthase.